The sequence spans 177 residues: Coatomer subunit zeta-1 (177 aa).

It belongs to the adaptor complexes small subunit family. Oligomeric complex that consists of at least the alpha, beta, beta', gamma, delta, epsilon and zeta subunits.

It is found in the cytoplasm. It localises to the golgi apparatus membrane. Its subcellular location is the cytoplasmic vesicle. The protein resides in the COPI-coated vesicle membrane. Functionally, the coatomer is a cytosolic protein complex that binds to dilysine motifs and reversibly associates with Golgi non-clathrin-coated vesicles, which further mediate biosynthetic protein transport from the ER, via the Golgi up to the trans Golgi network. Coatomer complex is required for budding from Golgi membranes, and is essential for the retrograde Golgi-to-ER transport of dilysine-tagged proteins. The zeta subunit may be involved in regulating the coat assembly and, hence, the rate of biosynthetic protein transport due to its association-dissociation properties with the coatomer complex. The protein is Coatomer subunit zeta-1 (COPZ1) of Oryza sativa subsp. japonica (Rice).